The chain runs to 196 residues: Peroxiredoxin TSA1-B (196 aa).

The region spanning Pro-3–Phe-161 is the Thioredoxin domain. Thr-45 to Val-47 lines the substrate pocket. Residue Cys-48 is the Cysteine sulfenic acid (-SOH) intermediate of the active site. Arg-124 lines the substrate pocket. Residues Trp-173–Lys-196 are disordered. The segment covering Pro-175–Lys-196 has biased composition (basic and acidic residues).

The protein belongs to the peroxiredoxin family. AhpC/Prx1 subfamily. Homodimer; disulfide-linked, upon oxidation.

The protein resides in the cell surface. The protein localises to the nucleus. It localises to the cytoplasm. The catalysed reaction is a hydroperoxide + [thioredoxin]-dithiol = an alcohol + [thioredoxin]-disulfide + H2O. Its function is as follows. Thiol-specific peroxidase that catalyzes the reduction of hydrogen peroxide and organic hydroperoxides to water and alcohols, respectively. Plays a role in cell protection against oxidative stress by detoxifying peroxides and as sensor of hydrogen peroxide-mediated signaling events. Also involved in the correct composition of the hyphal cell wall. In Candida albicans (strain SC5314 / ATCC MYA-2876) (Yeast), this protein is Peroxiredoxin TSA1-B.